Reading from the N-terminus, the 380-residue chain is Bifunctional enzyme IspD/IspF (380 aa).

The segment at 1–224 (MTIPATYAAI…ERILGDAMDI (224 aa)) is 2-C-methyl-D-erythritol 4-phosphate cytidylyltransferase. Residues 225–380 (RLGNGFDVHA…SIATATLVKG (156 aa)) are 2-C-methyl-D-erythritol 2,4-cyclodiphosphate synthase. A divalent metal cation contacts are provided by Asp231 and His233. 4-CDP-2-C-methyl-D-erythritol 2-phosphate-binding positions include 231-233 (DVH) and 257-258 (HS). A divalent metal cation is bound at residue His265. Residues 279 to 281 (DIG), 355 to 358 (TTSE), Phe362, and Arg365 each bind 4-CDP-2-C-methyl-D-erythritol 2-phosphate.

The protein in the N-terminal section; belongs to the IspD/TarI cytidylyltransferase family. IspD subfamily. In the C-terminal section; belongs to the IspF family. It depends on a divalent metal cation as a cofactor.

It catalyses the reaction 2-C-methyl-D-erythritol 4-phosphate + CTP + H(+) = 4-CDP-2-C-methyl-D-erythritol + diphosphate. The enzyme catalyses 4-CDP-2-C-methyl-D-erythritol 2-phosphate = 2-C-methyl-D-erythritol 2,4-cyclic diphosphate + CMP. It participates in isoprenoid biosynthesis; isopentenyl diphosphate biosynthesis via DXP pathway; isopentenyl diphosphate from 1-deoxy-D-xylulose 5-phosphate: step 2/6. It functions in the pathway isoprenoid biosynthesis; isopentenyl diphosphate biosynthesis via DXP pathway; isopentenyl diphosphate from 1-deoxy-D-xylulose 5-phosphate: step 4/6. In terms of biological role, bifunctional enzyme that catalyzes the formation of 4-diphosphocytidyl-2-C-methyl-D-erythritol from CTP and 2-C-methyl-D-erythritol 4-phosphate (MEP) (IspD), and catalyzes the conversion of 4-diphosphocytidyl-2-C-methyl-D-erythritol 2-phosphate (CDP-ME2P) to 2-C-methyl-D-erythritol 2,4-cyclodiphosphate (ME-CPP) with a corresponding release of cytidine 5-monophosphate (CMP) (IspF). The polypeptide is Bifunctional enzyme IspD/IspF (Paracoccus denitrificans (strain Pd 1222)).